Consider the following 310-residue polypeptide: Phosphoribosylaminoimidazole-succinocarboxamide synthase (310 aa).

This sequence belongs to the SAICAR synthetase family.

It catalyses the reaction 5-amino-1-(5-phospho-D-ribosyl)imidazole-4-carboxylate + L-aspartate + ATP = (2S)-2-[5-amino-1-(5-phospho-beta-D-ribosyl)imidazole-4-carboxamido]succinate + ADP + phosphate + 2 H(+). Its pathway is purine metabolism; IMP biosynthesis via de novo pathway; 5-amino-1-(5-phospho-D-ribosyl)imidazole-4-carboxamide from 5-amino-1-(5-phospho-D-ribosyl)imidazole-4-carboxylate: step 1/2. This is Phosphoribosylaminoimidazole-succinocarboxamide synthase from Xanthomonas campestris pv. campestris (strain B100).